The sequence spans 334 residues: Holliday junction branch migration complex subunit RuvB (334 aa).

The large ATPase domain (RuvB-L) stretch occupies residues A4–Y184. ATP is bound by residues I23, R24, G65, K68, T69, T70, E131–Y133, R174, Y184, and R221. Mg(2+) is bound at residue T69. Residues Q185–D255 form a small ATPAse domain (RuvB-S) region. The tract at residues A258 to E334 is head domain (RuvB-H). Positions 294, 313, and 318 each coordinate DNA.

Belongs to the RuvB family. Homohexamer. Forms an RuvA(8)-RuvB(12)-Holliday junction (HJ) complex. HJ DNA is sandwiched between 2 RuvA tetramers; dsDNA enters through RuvA and exits via RuvB. An RuvB hexamer assembles on each DNA strand where it exits the tetramer. Each RuvB hexamer is contacted by two RuvA subunits (via domain III) on 2 adjacent RuvB subunits; this complex drives branch migration. In the full resolvosome a probable DNA-RuvA(4)-RuvB(12)-RuvC(2) complex forms which resolves the HJ.

The protein localises to the cytoplasm. The enzyme catalyses ATP + H2O = ADP + phosphate + H(+). Its function is as follows. The RuvA-RuvB-RuvC complex processes Holliday junction (HJ) DNA during genetic recombination and DNA repair, while the RuvA-RuvB complex plays an important role in the rescue of blocked DNA replication forks via replication fork reversal (RFR). RuvA specifically binds to HJ cruciform DNA, conferring on it an open structure. The RuvB hexamer acts as an ATP-dependent pump, pulling dsDNA into and through the RuvAB complex. RuvB forms 2 homohexamers on either side of HJ DNA bound by 1 or 2 RuvA tetramers; 4 subunits per hexamer contact DNA at a time. Coordinated motions by a converter formed by DNA-disengaged RuvB subunits stimulates ATP hydrolysis and nucleotide exchange. Immobilization of the converter enables RuvB to convert the ATP-contained energy into a lever motion, pulling 2 nucleotides of DNA out of the RuvA tetramer per ATP hydrolyzed, thus driving DNA branch migration. The RuvB motors rotate together with the DNA substrate, which together with the progressing nucleotide cycle form the mechanistic basis for DNA recombination by continuous HJ branch migration. Branch migration allows RuvC to scan DNA until it finds its consensus sequence, where it cleaves and resolves cruciform DNA. This is Holliday junction branch migration complex subunit RuvB from Edwardsiella ictaluri (strain 93-146).